A 359-amino-acid polypeptide reads, in one-letter code: Peptide chain release factor 1 (359 aa).

The residue at position 236 (Gln236) is an N5-methylglutamine.

Belongs to the prokaryotic/mitochondrial release factor family. Post-translationally, methylated by PrmC. Methylation increases the termination efficiency of RF1.

The protein resides in the cytoplasm. Functionally, peptide chain release factor 1 directs the termination of translation in response to the peptide chain termination codons UAG and UAA. The sequence is that of Peptide chain release factor 1 from Malacoplasma penetrans (strain HF-2) (Mycoplasma penetrans).